The primary structure comprises 248 residues: tRNA (guanine-N(1)-)-methyltransferase (248 aa).

S-adenosyl-L-methionine is bound by residues Gly-117 and 137–142; that span reads LGDFVL.

Belongs to the RNA methyltransferase TrmD family. As to quaternary structure, homodimer.

The protein localises to the cytoplasm. It carries out the reaction guanosine(37) in tRNA + S-adenosyl-L-methionine = N(1)-methylguanosine(37) in tRNA + S-adenosyl-L-homocysteine + H(+). Functionally, specifically methylates guanosine-37 in various tRNAs. This is tRNA (guanine-N(1)-)-methyltransferase from Herminiimonas arsenicoxydans.